A 1101-amino-acid chain; its full sequence is MKSRQKGKKKGSAKERVFGCDLQEHLQHSGQEVPQVLKSCAEFVEEYGVVDGIYRLSGVSSNIQKLRQEFESERKPDLRRDVYLQDIHCVSSLCKAYFRELPDPLLTYRLYDKFAEAVGVQLEPERLVKILEVLRELPVPNYRTLEFLMRHLVHMASFSAQTNMHARNLAIVWAPNLLRSKDIEASGFNGTAAFMEVRVQSIVVEFILTHVDQLFGGAALSGGEVESGWRSLPGTRASGSPEDLMPRPLPYHLPSILQAGDGPPQMRPYHTIIEIAEHKRKGSLKVRKWRSIFNLGRSGHETKRKLPRGAEDREDKSNKGTLRPAKSMDSLSAAAGASDEPEGLVGPSSPRPSPLLPESLENDSIEAAEGEQEPEAEALGGTNSEPGTPRAGRSAIRAGGSSRAERCAGVHISDPYNVNLPLHITSILSVPPNIISNVSLARLTRGLECPALQHRPSPASGPGPGPGLGPGPPDEKLEASPASSPLADSGPDDLAPALEDSLSQEVQDSFSFLEDSSSSEPEWVGAEDGEVAQAEAAGAAFSPGEDDPGMGYLEELLGVGPQVEEFSVEPPLDDLSLDEAQFVLAPSCCSLDSAGPRPEVEEENGEEVFLSAYDDLSPLLGPKPPIWKGSGSLEGEAAGCGRQALGQGGEEQACWEVGEDKQAEPGGRLDIREEAEGSPETKVEAGKASEDRGEAGGSQETKVRLREGSREETEAKEEKSKGQKKADSMEAKGVEEPGGDEYTDEKEKEIEREEDEQREEAQVEAGRDLEQGAQEDQVAEEKWEVVQKQEAEGVREDEDKGQREKGYHEARKDQGDGEDSRSPEAATEGGAGEVSKERESGDGEAEGDQRAGGYYLEEDTLSEGSGVASLEVDCAKEGNPHSSEMEEVAPQPPQPEEMEPEGQPSPDGCLCPCSLGLGGVGMRLASTLVQVQQVRSVPVVPPKPQFAKMPSAMCSKIHVAPANPCPRPGRLDGTPGERAWGSRASRSSWRNGGSLSFDAAVALARDRQRTEAQGVRRTQTCTEGGDYCLIPRTSPCSMISAHSPRPLSCLELPSEGAEGSGSRSRLSLPPREPQVPDPLLSSQRRSYAFETQANPGKGEGL.

A Rho-GAP domain is found at 20 to 215; it reads CDLQEHLQHS…FILTHVDQLF (196 aa). Disordered regions lie at residues 224-243, 300-400, and 451-529; these read EVES…SPED, HETK…RAGG, and ALQH…AEDG. The segment covering 308 to 318 has biased composition (basic and acidic residues); it reads RGAEDREDKSN. A compositionally biased stretch (acidic residues) spans 360–376; sequence LENDSIEAAEGEQEPEA. Residues 459-472 are compositionally biased toward pro residues; it reads ASGPGPGPGLGPGP. Residues 508–520 are compositionally biased toward low complexity; sequence DSFSFLEDSSSSE. The residue at position 576 (S576) is a Phosphoserine. Disordered stretches follow at residues 621-906 and 965-991; these read GPKP…QPSP and CPRP…SWRN. 4 stretches are compositionally biased toward basic and acidic residues: residues 658 to 694, 701 to 735, 759 to 770, and 779 to 822; these read GEDK…DRGE, TKVR…KGVE, EEAQVEAGRDLE, and AEEK…DSRS. Over residues 976–991 the composition is skewed to low complexity; sequence GERAWGSRASRSSWRN. S996 carries the phosphoserine modification. The disordered stretch occupies residues 1050–1101; that stretch reads LELPSEGAEGSGSRSRLSLPPREPQVPDPLLSSQRRSYAFETQANPGKGEGL. A compositionally biased stretch (low complexity) spans 1053–1069; the sequence is PSEGAEGSGSRSRLSLP. The span at 1080-1094 shows a compositional bias: polar residues; that stretch reads LSSQRRSYAFETQAN.

In terms of assembly, interacts with RHOU in a GTP-independent manner.

Its subcellular location is the cytoplasmic vesicle. In terms of biological role, GTPase-activating protein (GAP) for RAC1 and RHOA, but not for CDC42. The sequence is that of Rho GTPase-activating protein 30 (ARHGAP30) from Homo sapiens (Human).